Reading from the N-terminus, the 537-residue chain is 2-isopropylmalate synthase (537 aa).

Positions 8–273 (IIIFDTTLRD…FLGRPVDSME (266 aa)) constitute a Pyruvate carboxyltransferase domain. Residues aspartate 17, histidine 208, histidine 210, and asparagine 244 each contribute to the Mn(2+) site. The segment at 408-537 (RLELVQVSCG…PSEPVLTSKN (130 aa)) is regulatory domain.

Belongs to the alpha-IPM synthase/homocitrate synthase family. LeuA type 1 subfamily. Homodimer. Requires Mn(2+) as cofactor.

It is found in the cytoplasm. The catalysed reaction is 3-methyl-2-oxobutanoate + acetyl-CoA + H2O = (2S)-2-isopropylmalate + CoA + H(+). Its pathway is amino-acid biosynthesis; L-leucine biosynthesis; L-leucine from 3-methyl-2-oxobutanoate: step 1/4. Catalyzes the condensation of the acetyl group of acetyl-CoA with 3-methyl-2-oxobutanoate (2-ketoisovalerate) to form 3-carboxy-3-hydroxy-4-methylpentanoate (2-isopropylmalate). The chain is 2-isopropylmalate synthase from Crocosphaera subtropica (strain ATCC 51142 / BH68) (Cyanothece sp. (strain ATCC 51142)).